Here is a 601-residue protein sequence, read N- to C-terminus: Elongation factor 4 (601 aa).

In terms of domain architecture, tr-type G spans 7–189; that stretch reads DNIRNFSIVA…AIVKRLPAPK (183 aa). GTP is bound by residues 19–24 and 136–139; these read DHGKST and NKVD.

The protein belongs to the TRAFAC class translation factor GTPase superfamily. Classic translation factor GTPase family. LepA subfamily.

It localises to the cell inner membrane. The enzyme catalyses GTP + H2O = GDP + phosphate + H(+). Functionally, required for accurate and efficient protein synthesis under certain stress conditions. May act as a fidelity factor of the translation reaction, by catalyzing a one-codon backward translocation of tRNAs on improperly translocated ribosomes. Back-translocation proceeds from a post-translocation (POST) complex to a pre-translocation (PRE) complex, thus giving elongation factor G a second chance to translocate the tRNAs correctly. Binds to ribosomes in a GTP-dependent manner. The polypeptide is Elongation factor 4 (Methylorubrum extorquens (strain CM4 / NCIMB 13688) (Methylobacterium extorquens)).